Here is a 143-residue protein sequence, read N- to C-terminus: 3-hydroxyacyl-[acyl-carrier-protein] dehydratase FabZ (143 aa).

His49 is an active-site residue.

This sequence belongs to the thioester dehydratase family. FabZ subfamily.

Its subcellular location is the cytoplasm. The enzyme catalyses a (3R)-hydroxyacyl-[ACP] = a (2E)-enoyl-[ACP] + H2O. Its function is as follows. Involved in unsaturated fatty acids biosynthesis. Catalyzes the dehydration of short chain beta-hydroxyacyl-ACPs and long chain saturated and unsaturated beta-hydroxyacyl-ACPs. This chain is 3-hydroxyacyl-[acyl-carrier-protein] dehydratase FabZ, found in Ehrlichia chaffeensis (strain ATCC CRL-10679 / Arkansas).